We begin with the raw amino-acid sequence, 411 residues long: Peptidyl-prolyl cis-trans isomerase (411 aa).

Ser2 carries the N-acetylserine modification. Disordered regions lie at residues 54–127 (IIKR…TLSP) and 160–302 (NYVK…PKSK). Acidic residues predominate over residues 61–87 (FEDDDFLGGDFDEDEIDEESSEEEEEE). Ser80 and Ser81 each carry phosphoserine. Thr89 carries the post-translational modification Phosphothreonine. Composition is skewed to acidic residues over residues 103–118 (ESED…DEFQ) and 173–242 (EGED…EEQK). At Tyr184 the chain carries Phosphotyrosine; by CK2. Residue Ser186 is modified to Phosphoserine; by CK2. Residues 251 to 260 (KSKKEKKRKH) are compositionally biased toward basic residues. A Nuclear localization signal motif is present at residues 256-271 (KKRKHEEKEEEKKAKK). Residues 261 to 296 (EEKEEEKKAKKVKKVEFKKDLEEGPTKPKSKKEQDK) are compositionally biased toward basic and acidic residues. The PPIase FKBP-type domain maps to 324 to 411 (GARVGMRYIG…FDVKLVSMKN (88 aa)).

It belongs to the FKBP-type PPIase family. FKBP3/4 subfamily. Interacts with NOP53. Phosphorylated at tyrosine and dephosphorylated by the phosphotyrosine-specific phosphoprotein phosphatase PTP1.

Its subcellular location is the nucleus. It is found in the nucleolus. It catalyses the reaction [protein]-peptidylproline (omega=180) = [protein]-peptidylproline (omega=0). Inhibited by both FK506 and rapamycin. Functionally, proline isomerase that belongs to an abundant class of enzymes that catalyze the cis-trans isomerization of X-Pro peptide bonds and can accelerate the refolding of proline-containing polypeptides. Specifically binds nuclear localization sequences. May be involved in the assembly or folding of ribosomal proteins. This is Peptidyl-prolyl cis-trans isomerase from Saccharomyces cerevisiae (strain ATCC 204508 / S288c) (Baker's yeast).